The sequence spans 433 residues: Ornithine decarboxylase 1B, chloroplastic (433 aa).

K96 bears the N6-(pyridoxal phosphate)lysine mark. Pyridoxal 5'-phosphate is bound by residues S228, G266, and 299–302 (EPGR). Substrate is bound at residue 342 to 343 (YD). C378 acts as the Proton donor; shared with dimeric partner in catalysis. D379 serves as a coordination point for substrate. A pyridoxal 5'-phosphate-binding site is contributed by Y407.

This sequence belongs to the Orn/Lys/Arg decarboxylase class-II family. As to quaternary structure, homodimer. Only the dimer is catalytically active, as the active sites are constructed of residues from both monomers. Pyridoxal 5'-phosphate serves as cofactor.

It is found in the plastid. Its subcellular location is the chloroplast. It catalyses the reaction L-ornithine + H(+) = putrescine + CO2. It functions in the pathway alkaloid biosynthesis; nicotine biosynthesis. The protein operates within amine and polyamine biosynthesis; putrescine biosynthesis via L-ornithine pathway; putrescine from L-ornithine: step 1/1. In terms of biological role, involved in the biosynthesis of pyridine alkaloid natural products, leading mainly to the production of anabasine, anatabine, nicotine and nornicotine, effective deterrents against herbivores with antiparasitic and pesticide properties (neurotoxins); nornicotine serves as the precursor in the synthesis of the carcinogen compound N'-nitrosonornicotine (NNN). Catalyzes the first and rate-limiting step of polyamine biosynthesis that converts ornithine into putrescine, which is the precursor for the polyamines, spermidine and spermine. Polyamines are essential for cell proliferation and are implicated in cellular processes, ranging from DNA replication to apoptosis. The sequence is that of Ornithine decarboxylase 1B, chloroplastic from Nicotiana tabacum (Common tobacco).